Consider the following 40-residue polypeptide: U12-ctenitoxin-Co1a (40 aa).

4 disulfide bridges follow: Cys-2–Cys-16, Cys-9–Cys-22, Cys-15–Cys-31, and Cys-24–Cys-29.

In terms of tissue distribution, expressed by the venom gland.

It is found in the secreted. Insecticidal neurotoxin that reversibly inhibits the N-methyl-D-aspartate (NMDA)-subtype of ionotropic glutamate receptor (GRIN) and inhibits inactivation of insect sodium channels (Nav). In vivo, is highly toxic to insects. This is U12-ctenitoxin-Co1a from Ctenus ornatus (Brazilian spider).